Here is a 288-residue protein sequence, read N- to C-terminus: Small ribosomal subunit protein uS3 (288 aa).

The region spanning 39–107 (VREYLKAKLK…PVAVNIEEVR (69 aa)) is the KH type-2 domain. The segment at 209–288 (GRNDLPAAET…AAAAADGKGE (80 aa)) is disordered. Positions 219–238 (PRPEEERRPRGPRRDGRPGD) are enriched in basic and acidic residues. Over residues 277-288 (APAAAAADGKGE) the composition is skewed to low complexity.

Belongs to the universal ribosomal protein uS3 family. Part of the 30S ribosomal subunit. Forms a tight complex with proteins S10 and S14.

Binds the lower part of the 30S subunit head. Binds mRNA in the 70S ribosome, positioning it for translation. The sequence is that of Small ribosomal subunit protein uS3 from Acidovorax sp. (strain JS42).